Here is a 393-residue protein sequence, read N- to C-terminus: Lipid-A-disaccharide synthase (393 aa).

Belongs to the LpxB family.

The catalysed reaction is a lipid X + a UDP-2-N,3-O-bis[(3R)-3-hydroxyacyl]-alpha-D-glucosamine = a lipid A disaccharide + UDP + H(+). It participates in bacterial outer membrane biogenesis; LPS lipid A biosynthesis. Functionally, condensation of UDP-2,3-diacylglucosamine and 2,3-diacylglucosamine-1-phosphate to form lipid A disaccharide, a precursor of lipid A, a phosphorylated glycolipid that anchors the lipopolysaccharide to the outer membrane of the cell. In Rhodopseudomonas palustris (strain ATCC BAA-98 / CGA009), this protein is Lipid-A-disaccharide synthase.